A 525-amino-acid polypeptide reads, in one-letter code: uncharacterized protein (525 aa).

2 consecutive transmembrane segments (helical) span residues 28–48 (FIDVHVANISVAAFLTPNLII) and 353–373 (GVNALLAAIGAEIGANILFTP). Residues 146-394 (DIKIGKLKVG…ELKIASKMMF (249 aa)) enclose the Pterin-binding domain.

It is found in the cell membrane. Unknown. Does not possess dihydropteroate synthase (DHPS) activity since it does not catalyze the condensation of 6-hydroxymethyl-7,8-dihydropterin pyrophosphate (DHPP) and 4-aminobenzoate to form 7,8-dihydropteroate. This is an uncharacterized protein from Methanocaldococcus jannaschii (strain ATCC 43067 / DSM 2661 / JAL-1 / JCM 10045 / NBRC 100440) (Methanococcus jannaschii).